Here is a 554-residue protein sequence, read N- to C-terminus: Perforin-1 (554 aa).

The first 20 residues, 1–20 (MAAYLFLLGLFLLLPRPVPA), serve as a signal peptide directing secretion. Intrachain disulfides connect Cys22–Cys75, Cys30–Cys72, and Cys101–Cys175. An MACPF domain is found at 26-374 (TRSECKQNHK…HYVMSRARWR (349 aa)). Residues 128–148 (WRAGLDVNPKPEANVHVSVAG) traverse the membrane as a beta stranded segment. Residue Asn204 is glycosylated (N-linked (GlcNAc...) asparagine). 4 disulfide bridges follow: Cys241-Cys407, Cys376-Cys392, Cys380-Cys394, and Cys396-Cys406. A beta stranded transmembrane segment spans residues 256–278 (CLSVEAQVSIGAQASVSSEYKAC). One can recognise an EGF-like domain in the interval 375–407 (DCNRPCRAGQHKSSRDSCQCVCQDSNVTNQDCC). Residues 395 to 513 (VCQDSNVTNQ…FHEVNCPLNH (119 aa)) enclose the C2 domain. Asn400 carries an N-linked (GlcNAc...) asparagine glycan. Residues Gly428, Asp429, Thr432, Asp435, Asn454, Asp483, Ala484, Asp485, Trp488, Asp489, Asp490, and Asp491 each coordinate Ca(2+). Cystine bridges form between Cys496–Cys509 and Cys524–Cys533. Residue Asn548 is glycosylated (N-linked (GlcNAc...) asparagine).

This sequence belongs to the complement C6/C7/C8/C9 family. Monomer, as soluble protein. Homooligomer; homooligomerizes to form a pore-forming ring. The cofactor is Ca(2+). Post-translationally, N-glycosylated. As to expression, detected in large granular lymphocytes and lymphokine-activated killer cells.

The protein resides in the cytolytic granule. Its subcellular location is the secreted. The protein localises to the cell membrane. It localises to the endosome lumen. Functionally, pore-forming protein that plays a key role in granzyme-mediated programmed cell death, and in defense against virus-infected or neoplastic cells. Can insert into the membrane of target cells in its calcium-bound form, oligomerize and form large pores. Promotes cytolysis and apoptosis of target cells by mediating the passage and uptake of cytotoxic granzymes. Facilitates the delivery of cationic cargo protein, while anionic or neural proteins are not delivered efficiently. Perforin pores allow the release of mature caspase-7 (CASP7) into the extracellular milieu. This is Perforin-1 (Prf1) from Rattus norvegicus (Rat).